The chain runs to 605 residues: Methyl-CpG-binding domain protein 1 (605 aa).

Positions 1 to 69 (MAEDWLDCPA…TLFDFKQGIL (69 aa)) constitute an MBD domain. Residues 80–123 (AVASKKRKKPSRPAKTRKRQVGPQSGEVRKEAPRDETKADTDTA) form a disordered region. The span at 83–99 (SKKRKKPSRPAKTRKRQ) shows a compositional bias: basic residues. The short motif at 84–88 (KKRKK) is the Nuclear localization signal element. Residues 106 to 120 (EVRKEAPRDETKADT) show a composition bias toward basic and acidic residues. Residue K117 forms a Glycyl lysine isopeptide (Lys-Gly) (interchain with G-Cter in SUMO2) linkage. 2 CXXC-type zinc fingers span residues 169–216 (RMFK…RRCL) and 217–263 (RIVE…RRCL). Residues C176, C179, C182, C188, C191, C194, C210, C215, C225, C228, C231, C237, C240, C243, C257, and C262 each contribute to the Zn(2+) site. A disordered region spans residues 269–308 (RRKGGCDSKMAARRRPGAQPLPPPPPSQSPEPTEPHPRAL). K277 participates in a covalent cross-link: Glycyl lysine isopeptide (Lys-Gly) (interchain with G-Cter in SUMO2). Residues 287 to 297 (QPLPPPPPSQS) are compositionally biased toward pro residues. S297 is modified (phosphoserine). The segment at 330–378 (TNRRQNRKCGACAACLRRMDCGRCDFCCDKPKFGGSNQKRQKCRWRQCL) adopts a CXXC-type 3 zinc-finger fold. Zn(2+)-binding residues include C338, C341, C344, C350, C353, C356, C372, and C377. Phosphoserine occurs at positions 391 and 399. Residues 391–451 (SESEDGAGSP…EAGGGFVLPP (61 aa)) form a disordered region. Residues 403–417 (YRRRKRPSSARRHHL) are compositionally biased toward basic residues. K422 is covalently cross-linked (Glycyl lysine isopeptide (Lys-Gly) (interchain with G-Cter in SUMO2)). Residues 426–439 (ATRTAQPDHTQAPT) are compositionally biased toward polar residues. Residue K440 forms a Glycyl lysine isopeptide (Lys-Gly) (interchain with G-Cter in SUMO2) linkage. Glycyl lysine isopeptide (Lys-Gly) (interchain with G-Cter in SUMO2); alternate cross-links involve residues K499 and K538. The disordered stretch occupies residues 520–573 (VLVPGCPSKAVDPGLPSVKQEPPDPEEDKEENKDDSASKLAPEEEAGGAGTPVI). Residues 529–592 (AVDPGLPSVK…RFRDTAVWLP (64 aa)) are transcriptional repression domain (TRD). Residue K558 forms a Glycyl lysine isopeptide (Lys-Gly) (interchain with G-Cter in SUMO2) linkage.

As to quaternary structure, interacts with OASL, ATF7IP, ATF7IP2 and BAHD1. Binds CHAF1A and the SUV39H1-CBX5 complex via the MBD domain. Binds MGP via the TRD domain. May be part of the MeCP1 complex. Sumoylated, sumoylation may increase interaction with ATF7IP. Widely expressed.

The protein localises to the nucleus. Its subcellular location is the nucleus matrix. It localises to the nucleus speckle. The protein resides in the chromosome. In terms of biological role, transcriptional repressor that binds CpG islands in promoters where the DNA is methylated at position 5 of cytosine within CpG dinucleotides. Binding is abolished by the presence of 7-mG that is produced by DNA damage by methylmethanesulfonate (MMS). Acts as transcriptional repressor and plays a role in gene silencing by recruiting ATF7IP, which in turn recruits factors such as the histone methyltransferase SETDB1. Probably forms a complex with SETDB1 and ATF7IP that represses transcription and couples DNA methylation and histone 'Lys-9' trimethylation. Isoform 1 and isoform 2 can also repress transcription from unmethylated promoters. In Homo sapiens (Human), this protein is Methyl-CpG-binding domain protein 1.